The primary structure comprises 192 residues: Xanthine phosphoribosyltransferase 2 (192 aa).

Positions 20 and 27 each coordinate xanthine. 131-135 (ANACA) contacts 5-phospho-alpha-D-ribose 1-diphosphate. Residue K159 participates in xanthine binding.

The protein belongs to the purine/pyrimidine phosphoribosyltransferase family. Xpt subfamily. In terms of assembly, homodimer.

The protein localises to the cytoplasm. The catalysed reaction is XMP + diphosphate = xanthine + 5-phospho-alpha-D-ribose 1-diphosphate. It participates in purine metabolism; XMP biosynthesis via salvage pathway; XMP from xanthine: step 1/1. Its function is as follows. Converts the preformed base xanthine, a product of nucleic acid breakdown, to xanthosine 5'-monophosphate (XMP), so it can be reused for RNA or DNA synthesis. The polypeptide is Xanthine phosphoribosyltransferase 2 (Clostridium perfringens (strain ATCC 13124 / DSM 756 / JCM 1290 / NCIMB 6125 / NCTC 8237 / Type A)).